A 133-amino-acid polypeptide reads, in one-letter code: Agouti-signaling protein (133 aa).

A signal peptide spans 1–22 (MDVIHLFLATLLVSLCFLTAYS). Basic and acidic residues predominate over residues 26-36 (PEEKPKDDRSL). A disordered region spans residues 26–83 (PEEKPKDDRSLRNNSSMNLLDSPSVSIMALNKKSKKISRKEAEKKKRSSKKKASMTKV). Residues 37 to 50 (RNNSSMNLLDSPSV) show a composition bias toward polar residues. N-linked (GlcNAc...) asparagine glycosylation is found at Asn-38 and Asn-39. The segment covering 70–79 (KKRSSKKKAS) has biased composition (basic residues). Intrachain disulfides connect Cys-94/Cys-109, Cys-101/Cys-115, Cys-108/Cys-126, Cys-112/Cys-133, and Cys-117/Cys-124. The Agouti domain occupies 94-133 (CVATRDSCKPPAPACCDPCASCQCRFFRSACSCRVLTRTC).

The protein localises to the secreted. In terms of biological role, involved in the regulation of melanogenesis. The binding of ASP to MC1R precludes alpha-MSH initiated signaling and thus blocks production of cAMP, leading to a down-regulation of eumelanogenesis (brown/black pigment) and thus increasing synthesis of pheomelanin (yellow/red pigment). The polypeptide is Agouti-signaling protein (ASIP) (Equus caballus (Horse)).